Reading from the N-terminus, the 523-residue chain is UDP-glucuronosyltransferase 3A1 (523 aa).

The first 23 residues, 1–23, serve as a signal peptide directing secretion; it reads MAVGRKSLILSLLIQHFVLLHGA. Over 24-483 the chain is Extracellular; sequence KILTVCFLGG…YSYQQPLYQQ (460 aa). A glycan (N-linked (GlcNAc...) asparagine) is linked at asparagine 125. Residues 484–504 form a helical membrane-spanning segment; that stretch reads YLLDVFLFVCVCVIGACYLTV. The Cytoplasmic segment spans residues 505–523; that stretch reads KLLKMFIQKLCSFRKLKQN.

This sequence belongs to the UDP-glycosyltransferase family.

The protein resides in the membrane. It catalyses the reaction glucuronate acceptor + UDP-alpha-D-glucuronate = acceptor beta-D-glucuronoside + UDP + H(+). In terms of biological role, UDP-glucuronosyltransferases catalyze phase II biotransformation reactions in which lipophilic substrates are conjugated with glucuronic acid to increase water solubility and enhance excretion. They are of major importance in the conjugation and subsequent elimination of potentially toxic xenobiotics and endogenous compounds. The protein is UDP-glucuronosyltransferase 3A1 (ugt3a1) of Xenopus laevis (African clawed frog).